Consider the following 666-residue polypeptide: uncharacterized protein (666 aa).

In terms of domain architecture, RNB spans 263 to 553 (RFDLTTLKTY…THFQMKAYLR (291 aa)).

The protein belongs to the RNR ribonuclease family.

This is an uncharacterized protein from Synechocystis sp. (strain ATCC 27184 / PCC 6803 / Kazusa).